We begin with the raw amino-acid sequence, 95 residues long: Co-chaperonin GroES (95 aa).

This sequence belongs to the GroES chaperonin family. In terms of assembly, heptamer of 7 subunits arranged in a ring. Interacts with the chaperonin GroEL.

It is found in the cytoplasm. Functionally, together with the chaperonin GroEL, plays an essential role in assisting protein folding. The GroEL-GroES system forms a nano-cage that allows encapsulation of the non-native substrate proteins and provides a physical environment optimized to promote and accelerate protein folding. GroES binds to the apical surface of the GroEL ring, thereby capping the opening of the GroEL channel. In Xylella fastidiosa (strain M23), this protein is Co-chaperonin GroES.